The primary structure comprises 565 residues: Galactoside 2-alpha-L-fucosyltransferase (565 aa).

The Cytoplasmic segment spans residues 1 to 43; it reads MNMLIKRVIAIKNPRGDDNNNNKLSDLETLTDKCTTCPLTLMR. Residues 44 to 64 form a helical; Signal-anchor for type II membrane protein membrane-spanning segment; the sequence is VMAFFVVSFMLFSVLFSLSVV. Over 65 to 565 the chain is Lumenal; sequence LRDPPSDAAI…MSWGLKLVDN (501 aa). 4 N-linked (GlcNAc...) asparagine glycosylation sites follow: asparagine 159, asparagine 263, asparagine 407, and asparagine 509.

Belongs to the glycosyltransferase 37 family.

It localises to the golgi apparatus. The protein localises to the golgi stack membrane. It functions in the pathway protein modification; protein glycosylation. Its function is as follows. Involved in cell wall biosynthesis. Adds the terminal fucosyl residue on xyloglucan side chains. The chain is Galactoside 2-alpha-L-fucosyltransferase (FT1) from Pisum sativum (Garden pea).